Consider the following 558-residue polypeptide: Formate--tetrahydrofolate ligase (558 aa).

66 to 73 (TPAGEGKT) contacts ATP.

It belongs to the formate--tetrahydrofolate ligase family.

The enzyme catalyses (6S)-5,6,7,8-tetrahydrofolate + formate + ATP = (6R)-10-formyltetrahydrofolate + ADP + phosphate. Its pathway is one-carbon metabolism; tetrahydrofolate interconversion. This is Formate--tetrahydrofolate ligase from Neisseria gonorrhoeae (strain ATCC 700825 / FA 1090).